A 350-amino-acid polypeptide reads, in one-letter code: S-adenosylmethionine:tRNA ribosyltransferase-isomerase (350 aa).

The protein belongs to the QueA family. As to quaternary structure, monomer.

The protein resides in the cytoplasm. It carries out the reaction 7-aminomethyl-7-carbaguanosine(34) in tRNA + S-adenosyl-L-methionine = epoxyqueuosine(34) in tRNA + adenine + L-methionine + 2 H(+). It participates in tRNA modification; tRNA-queuosine biosynthesis. Transfers and isomerizes the ribose moiety from AdoMet to the 7-aminomethyl group of 7-deazaguanine (preQ1-tRNA) to give epoxyqueuosine (oQ-tRNA). In Bacillus cereus (strain Q1), this protein is S-adenosylmethionine:tRNA ribosyltransferase-isomerase.